The chain runs to 104 residues: Transcription factor ILI1 (104 aa).

Positions 1-11 (MSSSRRSRSRR) are enriched in basic residues. The disordered stretch occupies residues 1 to 27 (MSSSRRSRSRRAGSSVPSSSSSSRTSI). Residues 12–27 (AGSSVPSSSSSSRTSI) are compositionally biased toward low complexity. The region spanning 16 to 71 (VPSSSSSSRTSISEDQIAELLSKLQALLPESQARNGAHRGSAARVLQETCSYIRSL) is the bHLH domain.

Belongs to the bHLH protein family. Interacts with IBH1.

Its function is as follows. Atypical and probable non DNA-binding bHLH transcription factor that acts as a positive regulator of cell elongation and plant development. Binds the transcription repressor IBH1 and forms a heterodimer of antagonistic bHLH transcription factors that function downstream of BZR1 to mediate brassinosteroid regulation of cell elongation and lamina inclination. The sequence is that of Transcription factor ILI1 (ILI1) from Oryza sativa subsp. indica (Rice).